The chain runs to 103 residues: Small ribosomal subunit protein uS10 (103 aa).

The protein belongs to the universal ribosomal protein uS10 family. Part of the 30S ribosomal subunit.

Its function is as follows. Involved in the binding of tRNA to the ribosomes. This is Small ribosomal subunit protein uS10 from Alteromonas mediterranea (strain DSM 17117 / CIP 110805 / LMG 28347 / Deep ecotype).